Here is a 173-residue protein sequence, read N- to C-terminus: MVRKPGKMYRNLAKKAYTRRKYMGGVPGSKIVQFEMGNLSQEFPVEISLEVLESCQIRHTALEAARIAINRKMMDQVGRANFHFKIRTYPHHVLRENKQATGAGADRVSEGMRMAFGKAVGTAARVQPKQKVFTVYTNEQYIEKSKDALRHGGYKLPSPARLVIERVPVDNTQ.

It belongs to the universal ribosomal protein uL16 family.

The protein is Large ribosomal subunit protein uL16 of Methanosphaerula palustris (strain ATCC BAA-1556 / DSM 19958 / E1-9c).